The following is a 280-amino-acid chain: Hydroxyethylthiazole kinase (280 aa).

Met-58 is a binding site for substrate. ATP is bound at residue Arg-129. Ala-206 is a substrate binding site.

Belongs to the Thz kinase family. Requires Mg(2+) as cofactor.

The catalysed reaction is 5-(2-hydroxyethyl)-4-methylthiazole + ATP = 4-methyl-5-(2-phosphooxyethyl)-thiazole + ADP + H(+). It participates in cofactor biosynthesis; thiamine diphosphate biosynthesis; 4-methyl-5-(2-phosphoethyl)-thiazole from 5-(2-hydroxyethyl)-4-methylthiazole: step 1/1. Its function is as follows. Thiazole kinase involved in thiamine salvage pathway. This is Hydroxyethylthiazole kinase (THIM) from Zea mays (Maize).